Here is a 67-residue protein sequence, read N- to C-terminus: Conotoxin Cp1.1 (67 aa).

A signal peptide spans 1-26 (MMFRLTSVSCFLLVIACLNLFQVVLT). Disulfide bonds link cysteine 29–cysteine 43, cysteine 36–cysteine 48, cysteine 42–cysteine 52, and cysteine 47–cysteine 56. A Tyrosine amide modification is found at tyrosine 60. A propeptide spanning residues 64–67 (ATFQ) is cleaved from the precursor.

It belongs to the conotoxin I2 superfamily. In terms of tissue distribution, expressed by the venom duct.

The protein localises to the secreted. This is Conotoxin Cp1.1 from Conus capitaneus (Captain cone).